The sequence spans 495 residues: UDP-N-acetylmuramoyl-L-alanyl-D-glutamate--2,6-diaminopimelate ligase (495 aa).

Residues L27, S29, and 44 to 46 (HQA) contribute to the UDP-N-acetyl-alpha-D-muramoyl-L-alanyl-D-glutamate site. 116–122 (GTNGKTT) is an ATP binding site. UDP-N-acetyl-alpha-D-muramoyl-L-alanyl-D-glutamate-binding positions include N157, 158–159 (TT), S185, Q191, and R193. K225 bears the N6-carboxylysine mark. Meso-2,6-diaminopimelate is bound by residues R390, 414 to 417 (DNPR), G465, and E469. Positions 414-417 (DNPR) match the Meso-diaminopimelate recognition motif motif.

It belongs to the MurCDEF family. MurE subfamily. Requires Mg(2+) as cofactor. Post-translationally, carboxylation is probably crucial for Mg(2+) binding and, consequently, for the gamma-phosphate positioning of ATP.

The protein resides in the cytoplasm. The enzyme catalyses UDP-N-acetyl-alpha-D-muramoyl-L-alanyl-D-glutamate + meso-2,6-diaminopimelate + ATP = UDP-N-acetyl-alpha-D-muramoyl-L-alanyl-gamma-D-glutamyl-meso-2,6-diaminopimelate + ADP + phosphate + H(+). It functions in the pathway cell wall biogenesis; peptidoglycan biosynthesis. In terms of biological role, catalyzes the addition of meso-diaminopimelic acid to the nucleotide precursor UDP-N-acetylmuramoyl-L-alanyl-D-glutamate (UMAG) in the biosynthesis of bacterial cell-wall peptidoglycan. This is UDP-N-acetylmuramoyl-L-alanyl-D-glutamate--2,6-diaminopimelate ligase from Shigella flexneri.